The following is a 163-amino-acid chain: ADP-ribosylation factor-like protein 2-binding protein (163 aa).

Belongs to the ARL2BP family. As to quaternary structure, interacts with GTP bound ARL2 and ARL3; the complex ARL2-ARL2BP as well as ARL2BP alone, binds to SLC25A4/ANT1. Interaction with ARL2 may be required for cilia basal body localization. Interacts with STAT3; interaction is enhanced with ARL2. Found in a complex with ARL2BP, ARL2 and SLC25A6. Found in a complex with ARL2, ARL2BP and SLC25A4. Interacts with STAT2, STAT3 and STAT4. Ubiquitous with higher expression in brain, especially in hippocampus and cortex. Also expressed in lung, cerebellum, liver, kidney, spleen and heart (at protein level).

The protein resides in the cytoplasm. The protein localises to the mitochondrion intermembrane space. Its subcellular location is the cytoskeleton. It is found in the microtubule organizing center. It localises to the centrosome. The protein resides in the nucleus. The protein localises to the spindle. Its subcellular location is the cilium basal body. Functionally, together with ARL2, plays a role in the nuclear translocation, retention and transcriptional activity of STAT3. May play a role as an effector of ARL2. The polypeptide is ADP-ribosylation factor-like protein 2-binding protein (Arl2bp) (Rattus norvegicus (Rat)).